A 104-amino-acid chain; its full sequence is MIRKAFVMQVNPDAHEEYQRRHNPIWPELAAVLKSHGAHNYAIYLDKARNLLFATVEIESEERWNAVASTDVCQRWWKYMTDVMPANPDNSPVSSELQEVFYLP.

Residue Tyr18 participates in substrate binding. The active-site Proton donor is the His22. Residues Tyr41 and Trp76–Trp77 each bind substrate.

Belongs to the rhamnose mutarotase family. In terms of assembly, homodimer.

Its subcellular location is the cytoplasm. The catalysed reaction is alpha-L-rhamnose = beta-L-rhamnose. It participates in carbohydrate metabolism; L-rhamnose metabolism. Functionally, involved in the anomeric conversion of L-rhamnose. This chain is L-rhamnose mutarotase, found in Escherichia coli O8 (strain IAI1).